The sequence spans 266 residues: L-aspartate dehydrogenase (266 aa).

NAD(+) is bound by residues Ala-123 and Asn-189. The active site involves His-219.

Belongs to the L-aspartate dehydrogenase family.

It catalyses the reaction L-aspartate + NADP(+) + H2O = oxaloacetate + NH4(+) + NADPH + H(+). It carries out the reaction L-aspartate + NAD(+) + H2O = oxaloacetate + NH4(+) + NADH + H(+). It participates in cofactor biosynthesis; NAD(+) biosynthesis; iminoaspartate from L-aspartate (dehydrogenase route): step 1/1. Functionally, specifically catalyzes the NAD or NADP-dependent dehydrogenation of L-aspartate to iminoaspartate. In Cupriavidus necator (strain ATCC 17699 / DSM 428 / KCTC 22496 / NCIMB 10442 / H16 / Stanier 337) (Ralstonia eutropha), this protein is L-aspartate dehydrogenase.